A 346-amino-acid chain; its full sequence is Melatonin receptor type 1C (346 aa).

The Extracellular segment spans residues 1 to 26 (MERPGSNGSCSGCRLEGGPAARAASG). N-linked (GlcNAc...) asparagine glycosylation is present at N7. Residues 27–47 (LAAVLIVTIVVDVLGNALVIL) form a helical membrane-spanning segment. Over 48–60 (SVLRNKKLRNAGN) the chain is Cytoplasmic. The helical transmembrane segment at 61 to 81 (IFVVSLSVADLVVAVYPYPLI) threads the bilayer. The Extracellular segment spans residues 82 to 99 (LSAIFHNGWTMGNIHCQI). A disulfide bridge links C97 with C174. A helical transmembrane segment spans residues 100–120 (SGFLMGLSVIGSIFNITAIAI). Over 121-139 (NRYCYICHSLRYDKLFNLK) the chain is Cytoplasmic. A helical transmembrane segment spans residues 140–160 (NTCCYICLTWTLTVVAIVPNF). Residues 161–184 (FVGSLQYDPRIYSCTFAQTVSTSY) are Extracellular-facing. Residues 185–205 (TITVVVVHFIVPLSIVTFCYL) traverse the membrane as a helical segment. The Cytoplasmic portion of the chain corresponds to 206 to 237 (RIWILVIQVKHRVRQDCKQKIRAADIRNFLTM). A helical membrane pass occupies residues 238-258 (FVVFVLFAVCWGPLNFIGLAV). At 259-271 (SINPSKVQPHIPE) the chain is on the extracellular side. The chain crosses the membrane as a helical span at residues 272-292 (WLFVLSYFMAYFNSCLNAVIY). The Cytoplasmic segment spans residues 293 to 346 (GLLNQNFRKEYKRILLMLRTPRLLFIDVSKGGTEGLKSKPSPAVTNNNQAEIHL). Residues 326-346 (EGLKSKPSPAVTNNNQAEIHL) are disordered. The span at 335-346 (AVTNNNQAEIHL) shows a compositional bias: polar residues.

This sequence belongs to the G-protein coupled receptor 1 family. In terms of tissue distribution, expressed in optic tectum, neostriatum, hypothalamus, thalamus and pineal gland, less in cerebellum and retina.

The protein resides in the cell membrane. In terms of biological role, high affinity receptor for melatonin. The activity of this receptor is mediated by pertussis toxin sensitive G proteins that inhibits adenylate cyclase activity. The sequence is that of Melatonin receptor type 1C from Gallus gallus (Chicken).